Consider the following 288-residue polypeptide: Syntaxin-1A (288 aa).

Positions 1–13 are enriched in basic and acidic residues; that stretch reads MKDRTQELRTAKD. The interval 1–20 is disordered; sequence MKDRTQELRTAKDSDDDDDV. Over 1-265 the chain is Cytoplasmic; the sequence is MKDRTQELRT…KYQSKARRKK (265 aa). S14, S64, and S95 each carry phosphoserine. Residues 68-109 adopt a coiled-coil conformation; sequence DEKTKEELEELMSDIKKTANKVRSKLKSIEQSIEQEEGLNRS. S188 is subject to Phosphoserine; by DAPK1. The 63-residue stretch at 192 to 254 folds into the t-SNARE coiled-coil homology domain; the sequence is LSEIETRHSE…ERAVSDTKKA (63 aa). Residues K252, K253, and K256 each participate in a glycyl lysine isopeptide (Lys-Gly) (interchain with G-Cter in SUMO) cross-link. The helical; Anchor for type IV membrane protein transmembrane segment at 266–288 threads the bilayer; sequence IMIVICCVVLGIVIASTFGGIFG.

This sequence belongs to the syntaxin family. As to quaternary structure, part of the SNARE core complex containing SNAP25, VAMP2 and STX1A; this complex constitutes the basic catalytic machinery of the complex neurotransmitter release apparatus. The SNARE complex interacts with CPLX1. Interacts with STXBP1. The interaction with STXBP1 promotes assembly of the SNARE complex. Interacts (via C-terminus) with KCNB1 (via C-terminus); the interaction increases in a calcium-dependent manner and induces a pore-independent enhancement of exocytosis in neuroendocrine cells, chromaffin cells, pancreatic beta cells and from the soma of dorsal root ganglia (DRG) neurons. Interacts with SYTL4. Interacts with STXBP6. Interacts with PLCL1 (via C2 domain). Interacts with OTOF. Interacts with LGI3. Interacts (via the H3 domain) with SLC6A4 (via the N-terminus); this interaction regulates SLC4A6 channel conductance in thalamocortical neurons. Interacts with SYT6 and SYT8; the interaction is Ca(2+)-dependent. Interacts with VAMP8. Interacts with SNAP23. Interacts with VAPA and SYBU. Interacts with PRRT2. Interacts with SEPT8. Interacts with STXBP5L. Interacts with synaptotagmin-1/SYT1. Interacts with SEPTIN5; in the cerebellar cortex. Interacts with SEPTIN4; in the striatum. Phosphorylated by CK2. Phosphorylation at Ser-188 by DAPK1 significantly decreases its interaction with STXBP1. Post-translationally, sumoylated, sumoylation is required for regulation of synaptic vesicle endocytosis. In terms of processing, (Microbial infection) Targeted and hydrolyzed by C.botulinum neurotoxin type C (BoNT/C) which inhibits neurotransmitter release. Probably hydrolyzes the 253-Lys-|-Ala-254 bond.

The protein localises to the cytoplasmic vesicle. The protein resides in the secretory vesicle. It localises to the synaptic vesicle membrane. Its subcellular location is the synapse. It is found in the synaptosome. The protein localises to the cell membrane. In terms of biological role, plays an essential role in hormone and neurotransmitter calcium-dependent exocytosis and endocytosis. Part of the SNARE (Soluble NSF Attachment Receptor) complex composed of SNAP25, STX1A and VAMP2 which mediates the fusion of synaptic vesicles with the presynaptic plasma membrane. STX1A and SNAP25 are localized on the plasma membrane while VAMP2 resides in synaptic vesicles. The pairing of the three SNAREs from the N-terminal SNARE motifs to the C-terminal anchors leads to the formation of the SNARE complex, which brings membranes into close proximity and results in final fusion. Participates in the calcium-dependent regulation of acrosomal exocytosis in sperm. Also plays an important role in the exocytosis of hormones such as insulin or glucagon-like peptide 1 (GLP-1). The chain is Syntaxin-1A (STX1A) from Bos taurus (Bovine).